Consider the following 340-residue polypeptide: UDP-3-O-acylglucosamine N-acyltransferase (340 aa).

The active-site Proton acceptor is His237.

The protein belongs to the transferase hexapeptide repeat family. LpxD subfamily. In terms of assembly, homotrimer.

It carries out the reaction a UDP-3-O-[(3R)-3-hydroxyacyl]-alpha-D-glucosamine + a (3R)-hydroxyacyl-[ACP] = a UDP-2-N,3-O-bis[(3R)-3-hydroxyacyl]-alpha-D-glucosamine + holo-[ACP] + H(+). It functions in the pathway bacterial outer membrane biogenesis; LPS lipid A biosynthesis. In terms of biological role, catalyzes the N-acylation of UDP-3-O-acylglucosamine using 3-hydroxyacyl-ACP as the acyl donor. Is involved in the biosynthesis of lipid A, a phosphorylated glycolipid that anchors the lipopolysaccharide to the outer membrane of the cell. This Desulfosudis oleivorans (strain DSM 6200 / JCM 39069 / Hxd3) (Desulfococcus oleovorans) protein is UDP-3-O-acylglucosamine N-acyltransferase.